We begin with the raw amino-acid sequence, 296 residues long: Glycine--tRNA ligase alpha subunit (296 aa).

Belongs to the class-II aminoacyl-tRNA synthetase family. Tetramer of two alpha and two beta subunits.

It is found in the cytoplasm. It carries out the reaction tRNA(Gly) + glycine + ATP = glycyl-tRNA(Gly) + AMP + diphosphate. In Listeria innocua serovar 6a (strain ATCC BAA-680 / CLIP 11262), this protein is Glycine--tRNA ligase alpha subunit.